We begin with the raw amino-acid sequence, 256 residues long: Inner membrane transport permease YadH (256 aa).

Over 1-22 (MMHLYWVALKSIWAKEIHRFMR) the chain is Periplasmic. The ABC transmembrane type-2 domain occupies 22–251 (RIWVQTLVPP…LICWSLIQRG (230 aa)). Residues 23–43 (IWVQTLVPPVITMTLYFIIFG) traverse the membrane as a helical segment. At 44 to 52 (NLIGSRIGD) the chain is on the cytoplasmic side. A helical membrane pass occupies residues 53–73 (MHGFSYMQFIVPGLIMMSVIT). Topologically, residues 74–94 (NAYANVASSFFGAKFQRNIEE) are periplasmic. A helical membrane pass occupies residues 95–115 (LLVAPVPTHVIIAGYVGGGVA). Arg116 is a topological domain (cytoplasmic). A helical transmembrane segment spans residues 117–137 (GLFVGILVTAISLFFVPFQVH). Ser138 is a topological domain (periplasmic). Residues 139–159 (WVFVALTLVLTAVLFSLAGLL) form a helical membrane-spanning segment. The Cytoplasmic segment spans residues 160 to 169 (NGVFAKTFDD). A helical transmembrane segment spans residues 170–190 (ISLVPTFVLTPLTYLGGVFYS). Residues 191–223 (LTLLPPFWQGLSHLNPIVYMISGFRYGFLGIND) are Periplasmic-facing. Residues 224–244 (VPLVTTFGVLVVFIVAFYLIC) traverse the membrane as a helical segment. Residues 245-256 (WSLIQRGRGLRS) lie on the Cytoplasmic side of the membrane.

Belongs to the ABC-2 integral membrane protein family.

The protein resides in the cell inner membrane. This Escherichia coli O157:H7 protein is Inner membrane transport permease YadH (yadH).